Reading from the N-terminus, the 221-residue chain is Chalcone--flavanone isomerase (221 aa).

Thr50, Asn115, and Thr192 together coordinate substrate.

It belongs to the chalcone isomerase family.

The catalysed reaction is a chalcone = a flavanone.. The protein operates within secondary metabolite biosynthesis; flavonoid biosynthesis. In terms of biological role, catalyzes the intramolecular cyclization of bicyclic chalcones into tricyclic (S)-flavanones. Responsible for the isomerization of 4,2',4',6'-tetrahydroxychalcone (also termed chalcone) into naringenin. The sequence is that of Chalcone--flavanone isomerase (CHI) from Phaseolus vulgaris (Kidney bean).